The following is a 286-amino-acid chain: Soluble epoxide hydrolase (286 aa).

In terms of domain architecture, AB hydrolase-1 spans 26 to 123 (YPLVLLHGWP…DLVERLFILD (98 aa)). Catalysis depends on Asp99, which acts as the Nucleophile. Tyr209 functions as the Proton donor in the catalytic mechanism. His264 functions as the Proton acceptor in the catalytic mechanism.

Belongs to the AB hydrolase superfamily. Epoxide hydrolase family. In terms of assembly, homotetramer.

The protein resides in the cytoplasm. It is found in the cell membrane. The enzyme catalyses an epoxide + H2O = an ethanediol. Involved in catabolic degradation of epoxides. Shows highest activity towards C6 and C7 carbocyclic epoxides. Also active towards linear 1,2-epoxyalkanes. This chain is Soluble epoxide hydrolase, found in Corynebacterium sp. (strain C12).